The chain runs to 186 residues: Photosystem I assembly protein Ycf4 (186 aa).

A run of 2 helical transmembrane segments spans residues 22-42 and 57-77; these read FCWA…GTSS and IIFF…LFIS.

Belongs to the Ycf4 family.

It localises to the plastid. Its subcellular location is the chloroplast thylakoid membrane. Its function is as follows. Seems to be required for the assembly of the photosystem I complex. The chain is Photosystem I assembly protein Ycf4 from Vitis vinifera (Grape).